Here is a 443-residue protein sequence, read N- to C-terminus: FLYWCH-type zinc finger-containing protein peb-1 (443 aa).

Residues 22–49 (KPGSSDISSSSTDTSAISPISVSSMPLS) form a disordered region. The span at 25 to 42 (SSDISSSSTDTSAISPIS) shows a compositional bias: low complexity. Residues 46–203 (MPLSPDKEKK…RNKDGKPKKP (158 aa)) constitute a DNA-binding region (required for DNA-binding). The FLYWCH-type zinc-finger motif lies at 69–135 (IVTSFKGYQK…NACTKGSHNH (67 aa)). The tract at residues 251-271 (PTIQIPQPIPTPIQHQQQEQS) is disordered.

It localises to the nucleus. Putative transcription factor. Binds to specific sequence motif 5'-[TC][AGT]TGCC[GA][AT]-3' in regulatory elements of target genes such as myosin myo-2. May modulate gene expression, perhaps acting in opposition to transcription factor pha-4. Involved in morphogenesis, perhaps especially in formation of the pharynx. Plays roles in molting, feeding and morphology. In Caenorhabditis elegans, this protein is FLYWCH-type zinc finger-containing protein peb-1.